Consider the following 189-residue polypeptide: MAAKQPPPLMKKHSQTDLVSRLKTRKILGVGGEDDDGEVHRSKISQVLGNEIKFAVREPLGLRVWQFLSAMLFSSVAIMALALPDQLYDAVFDGAEVTSKTPIRLYGGALLSISLIMWNALYTAEKVIIRWTLLTEACYFGVQSLVVTATLAETGLMSLGTLLLLASRLLFVIVSIYYYYQVGRKPKKV.

Residues Met1–Arg63 are Cytoplasmic-facing. Ser14 bears the Phosphoserine mark. Residues Val64 to Pro84 traverse the membrane as a helical segment. Residues Asp85 to Gly108 are Extracellular-facing. A helical membrane pass occupies residues Ala109–Ile129. Residue Arg130 is a topological domain, cytoplasmic. A helical membrane pass occupies residues Trp131–Leu151. Topologically, residues Ala152 to Gly155 are extracellular. A helical membrane pass occupies residues Leu156–Ile176. Topologically, residues Tyr177–Val189 are cytoplasmic.

The protein localises to the membrane. This Rattus norvegicus (Rat) protein is Tumor protein p53-inducible protein 11 (Tp53i11).